A 416-amino-acid chain; its full sequence is Transcription termination factor Rho (416 aa).

Residues 51-121 (LIYSYGELDI…LKLIYVNGEK (71 aa)) enclose the Rho RNA-BD domain. ATP is bound by residues 162–167 (GKGQRG), 174–179 (KAGKTT), and Arg-205.

The protein belongs to the Rho family. As to quaternary structure, homohexamer. The homohexamer assembles into an open ring structure.

In terms of biological role, facilitates transcription termination by a mechanism that involves Rho binding to the nascent RNA, activation of Rho's RNA-dependent ATPase activity, and release of the mRNA from the DNA template. The polypeptide is Transcription termination factor Rho (Streptobacillus moniliformis (strain ATCC 14647 / DSM 12112 / NCTC 10651 / 9901)).